A 184-amino-acid polypeptide reads, in one-letter code: ATP synthase subunit b, chloroplastic (184 aa).

The helical transmembrane segment at 27 to 49 (LATNPINLSVVFGVLIFFGKGVL) threads the bilayer.

It belongs to the ATPase B chain family. In terms of assembly, F-type ATPases have 2 components, F(1) - the catalytic core - and F(0) - the membrane proton channel. F(1) has five subunits: alpha(3), beta(3), gamma(1), delta(1), epsilon(1). F(0) has four main subunits: a(1), b(1), b'(1) and c(10-14). The alpha and beta chains form an alternating ring which encloses part of the gamma chain. F(1) is attached to F(0) by a central stalk formed by the gamma and epsilon chains, while a peripheral stalk is formed by the delta, b and b' chains.

The protein localises to the plastid. It localises to the chloroplast thylakoid membrane. F(1)F(0) ATP synthase produces ATP from ADP in the presence of a proton or sodium gradient. F-type ATPases consist of two structural domains, F(1) containing the extramembraneous catalytic core and F(0) containing the membrane proton channel, linked together by a central stalk and a peripheral stalk. During catalysis, ATP synthesis in the catalytic domain of F(1) is coupled via a rotary mechanism of the central stalk subunits to proton translocation. In terms of biological role, component of the F(0) channel, it forms part of the peripheral stalk, linking F(1) to F(0). This Lobularia maritima (Sweet alyssum) protein is ATP synthase subunit b, chloroplastic.